Here is a 206-residue protein sequence, read N- to C-terminus: Small ribosomal subunit protein uS4 (206 aa).

The interval 27-47 is disordered; sequence PSESKCNMNAAPGQHGGRRGR. Positions 96–158 constitute an S4 RNA-binding domain; the sequence is QRLDNVVYRM…SRKQIRIQSA (63 aa).

This sequence belongs to the universal ribosomal protein uS4 family. In terms of assembly, part of the 30S ribosomal subunit. Contacts protein S5. The interaction surface between S4 and S5 is involved in control of translational fidelity.

In terms of biological role, one of the primary rRNA binding proteins, it binds directly to 16S rRNA where it nucleates assembly of the body of the 30S subunit. With S5 and S12 plays an important role in translational accuracy. The protein is Small ribosomal subunit protein uS4 of Dichelobacter nodosus (strain VCS1703A).